A 494-amino-acid polypeptide reads, in one-letter code: O-acetyltransferase ptmV (494 aa).

The interval 181 to 203 is disordered; that stretch reads ESQQDSREKLRHSGGPPDPRFDH.

This sequence belongs to the fumigaclavine B O-acetyltransferase family. As to quaternary structure, monomer.

Its pathway is secondary metabolite biosynthesis. Functionally, O-acetyltransferase; part of the gene cluster that mediates the biosynthesis of the indole diterpenes penitrems. The geranylgeranyl diphosphate (GGPP) synthase ptmG catalyzes the first step in penitrem biosynthesis via conversion of farnesyl pyrophosphate and isopentyl pyrophosphate into geranylgeranyl pyrophosphate (GGPP). Condensation of indole-3-glycerol phosphate with GGPP by the prenyl transferase ptmC then forms 3-geranylgeranylindole (3-GGI). Epoxidation by the FAD-dependent monooxygenase ptmM leads to a epoxidized-GGI that is substrate of the terpene cyclase ptmB for cyclization to yield paspaline. Paspaline is subsequently converted to 13-desoxypaxilline by the cytochrome P450 monooxygenase ptmP, the latter being then converted to paxilline by the cytochrome P450 monooxygenase ptmQ. Paxilline is converted to beta-paxitriol via C-10 ketoreduction by the short-chain dehydrogenase ptmH which can be monoprenylated at the C-20 by the indole diterpene prenyltransferase ptmD. A two-step elimination (acetylation and elimination) process performed by the O-acetyltransferase ptmV and ptmI leads to the production of the prenylated form of penijanthine. The FAD-linked oxidoreductase ptmO then converts the prenylated form of penijanthine into PC-M5 which is in turn transformed into PC-M4 by the aromatic dimethylallyltransferase ptmE. Five sequential oxidative transformations performed by the cytochrome P450 monooxygenases ptmK, ptmU, ptmL, ptmN and ptmJ yield the various penitrem compounds. PtmK, ptmU and ptmM are involved in the formation of the key bicyclic ring of penitrem C via the formation of the intermediates secopenitrem D and penitrem D. PtmL catalyzes the epoxidation of penitrem D and C to yield penitrem B and F, respectively. PtmJ catalyzes the last benzylic hydroxylation to convert penitrem B to prenitrem E and penitrem F to penitrem A. This is O-acetyltransferase ptmV from Penicillium ochrochloron.